Reading from the N-terminus, the 551-residue chain is Steroid transmembrane transporter SLC22A24 (551 aa).

A run of 12 helical transmembrane segments spans residues 16-36 (FQIL…PHTV), 146-166 (SVAK…GGHL), 174-194 (FIVT…AFAP), 204-222 (FLTG…LLIL), 235-255 (ALIF…AFGI), 260-280 (HLQL…RWLS), 350-370 (ICLL…LLIN), 378-398 (VFLL…LGNF), 410-430 (IIFM…TQEM), 435-455 (LVLA…TAVL), 469-489 (LGVI…LMIL), and 496-516 (LPWI…LLLP). The interval 524–551 (PDSIQDVENKRKSSREVKKDAVAKVTPF) is disordered. Basic and acidic residues predominate over residues 530-545 (VENKRKSSREVKKDAV).

As to expression, localized to the kidney. Mainly expressed in the late segments of proximal tubules.

It localises to the cell membrane. The catalysed reaction is estrone 3-sulfate(out) + glutarate(in) = estrone 3-sulfate(in) + glutarate(out). It carries out the reaction 17beta-estradiol 17-O-(beta-D-glucuronate)(out) + glutarate(in) = 17beta-estradiol 17-O-(beta-D-glucuronate)(in) + glutarate(out). The enzyme catalyses dehydroepiandrosterone 3-sulfate(out) + glutarate(in) = dehydroepiandrosterone 3-sulfate(in) + glutarate(out). In terms of biological role, renal transmembrane organic anion/dicarboxylate exchanger that participates in the reabsorption of conjugated steroids, as well as bile acids, driven by an outward gradient of dicarboxylates such as glutarate or succinate. Transports estrone 3-sulfate and estradiol-17-glucuronide (17beta-estradiol 17-O-(beta-D-glucuronate)), but not androstanediol glucuronide (5alpha-androstane-3alpha,17beta-diol 3-O-(beta-D-glucuronate)), nor taurocholate. Prefers sulfate conjugates of steroids rather than glucuronide conjugates. In Rattus norvegicus (Rat), this protein is Steroid transmembrane transporter SLC22A24.